The primary structure comprises 274 residues: Putative ABC transporter ATP-binding protein alr3946 (274 aa).

Residues 6 to 242 (LTFEQVYYTY…REILDSIELG (237 aa)) enclose the ABC transporter domain. ATP is bound at residue 40-47 (GRNGCGKT).

It belongs to the ABC transporter superfamily.

The protein localises to the cell inner membrane. Functionally, probably part of an ABC transporter complex. Responsible for energy coupling to the transport system. This is Putative ABC transporter ATP-binding protein alr3946 from Nostoc sp. (strain PCC 7120 / SAG 25.82 / UTEX 2576).